The sequence spans 347 residues: N-acetyl-gamma-glutamyl-phosphate reductase (347 aa).

C151 is an active-site residue.

The protein belongs to the NAGSA dehydrogenase family. Type 1 subfamily.

The protein localises to the cytoplasm. It catalyses the reaction N-acetyl-L-glutamate 5-semialdehyde + phosphate + NADP(+) = N-acetyl-L-glutamyl 5-phosphate + NADPH + H(+). Its pathway is amino-acid biosynthesis; L-arginine biosynthesis; N(2)-acetyl-L-ornithine from L-glutamate: step 3/4. Functionally, catalyzes the NADPH-dependent reduction of N-acetyl-5-glutamyl phosphate to yield N-acetyl-L-glutamate 5-semialdehyde. This is N-acetyl-gamma-glutamyl-phosphate reductase from Corynebacterium glutamicum (strain R).